The following is a 268-amino-acid chain: Interleukin-1 beta (268 aa).

Residues 1 to 116 (MATVPELTSE…TWDDYSLECD (116 aa)) constitute a propeptide that is removed on maturation.

It belongs to the IL-1 family. In terms of assembly, monomer. In its precursor form, weakly interacts with full-length MEFV; the mature cytokine does not interact at all. Interacts with integrins ITGAV:ITGBV and ITGA5:ITGB1; integrin-binding is required for IL1B signaling. Interacts with cargo receptor TMED10; the interaction is direct and is required for the secretion of IL1B mature form. Interacts with HSP90AB1; the interaction facilitates cargo translocation into the ERGIC. Interacts with HSP90B1; the interaction facilitates cargo translocation into the ERGIC.

The protein resides in the cytoplasm. Its subcellular location is the cytosol. It is found in the secreted. The protein localises to the lysosome. It localises to the extracellular exosome. Potent pro-inflammatory cytokine. Initially discovered as the major endogenous pyrogen, induces prostaglandin synthesis, neutrophil influx and activation, T-cell activation and cytokine production, B-cell activation and antibody production, and fibroblast proliferation and collagen production. Promotes Th17 differentiation of T-cells. Synergizes with IL12/interleukin-12 to induce IFNG synthesis from T-helper 1 (Th1) cells. Plays a role in angiogenesis by inducing VEGF production synergistically with TNF and IL6. Involved in transduction of inflammation downstream of pyroptosis: its mature form is specifically released in the extracellular milieu by passing through the gasdermin-D (GSDMD) pore. This is Interleukin-1 beta (IL1B) from Oryctolagus cuniculus (Rabbit).